A 141-amino-acid polypeptide reads, in one-letter code: Hemoglobin subunit alpha-2 (141 aa).

Position 1 is an N-acetylserine (S1). Residues S1 to R141 form the Globin domain. H59 serves as a coordination point for O2. H88 is a binding site for heme b.

The protein belongs to the globin family. Hb2 is a heterotetramer of two alpha-2 chains and two beta chains. In terms of tissue distribution, red blood cells.

Its function is as follows. Involved in oxygen transport from gills to the various peripheral tissues. The polypeptide is Hemoglobin subunit alpha-2 (hba2) (Notothenia angustata (Rockcod)).